The chain runs to 460 residues: Cysteine--tRNA ligase (460 aa).

Cys-29 contributes to the Zn(2+) binding site. The short motif at 31–41 (ATPQSSPHIGH) is the 'HIGH' region element. Residues Cys-212, His-237, and Glu-241 each contribute to the Zn(2+) site. The 'KMSKS' region signature appears at 268 to 272 (KMSKS). Lys-271 lines the ATP pocket.

It belongs to the class-I aminoacyl-tRNA synthetase family. In terms of assembly, monomer. Requires Zn(2+) as cofactor.

The protein resides in the cytoplasm. It catalyses the reaction tRNA(Cys) + L-cysteine + ATP = L-cysteinyl-tRNA(Cys) + AMP + diphosphate. The sequence is that of Cysteine--tRNA ligase from Corynebacterium glutamicum (strain ATCC 13032 / DSM 20300 / JCM 1318 / BCRC 11384 / CCUG 27702 / LMG 3730 / NBRC 12168 / NCIMB 10025 / NRRL B-2784 / 534).